The primary structure comprises 396 residues: Purine ribonucleoside efflux pump NepI (396 aa).

Residues 1-21 (MSEFIAENRGADAITRPNWSA) lie on the Cytoplasmic side of the membrane. Residues 22–42 (VFSVAFCVACLIIVEFLPVSL) traverse the membrane as a helical segment. Topologically, residues 43–54 (LTPMAQDLGISE) are periplasmic. The chain crosses the membrane as a helical span at residues 55–75 (GVAGQSVTVTAFVAMFASLFI). Residues 76-85 (TQTIQATDRR) are Cytoplasmic-facing. A helical membrane pass occupies residues 86-106 (YVVILFAVLLTLSCLLVSFAN). Serine 107 is a topological domain (periplasmic). A helical membrane pass occupies residues 108-128 (FSLLLIGRACLGLALGGFWAI). Topologically, residues 129 to 147 (SASLTMRLVPPRTVPKALS) are cytoplasmic. A helical membrane pass occupies residues 148 to 168 (VIFGAVSIALVIAAPLGGFLG). The Periplasmic segment spans residues 169–175 (ELIGWRN). The helical transmembrane segment at 176–196 (VFNAAAAMGVLCIFWIIKSLP) threads the bilayer. The Cytoplasmic segment spans residues 197-215 (SLPGEPSHQKQNTFRLLQR). A helical transmembrane segment spans residues 216–236 (PGVMAGMIAIFMSFAGQFAFF). Residues 237 to 255 (TYIRPVYMNLAGFGVDGLT) lie on the Periplasmic side of the membrane. The chain crosses the membrane as a helical span at residues 256–276 (LVLLSFGIASFVGTSLSSFIL). The Cytoplasmic segment spans residues 277-281 (KRSVK). Residues 282-302 (LALAGAPFVLALSALVLTLWG) form a helical membrane-spanning segment. The Periplasmic portion of the chain corresponds to 303-305 (SDK). A helical membrane pass occupies residues 306–326 (IVATGVAIIWGLTFALIPVGW). Residues 327-343 (STWITRSLADQAEKAGS) lie on the Cytoplasmic side of the membrane. The helical transmembrane segment at 344-364 (IQVAVIQLANTCGAAIGGYAL) threads the bilayer. Residues 365–366 (DN) lie on the Periplasmic side of the membrane. Residues 367–387 (IGLTSPLMLSGTLMLLTALLV) traverse the membrane as a helical segment. Residues 388 to 396 (TAKVKMKKS) are Cytoplasmic-facing.

It belongs to the major facilitator superfamily. DHA1 family. NepI (TC 2.A.1.2.26) subfamily.

The protein localises to the cell inner membrane. It carries out the reaction inosine(in) + H(+)(out) = inosine(out) + H(+)(in). It catalyses the reaction guanosine(in) + H(+)(out) = guanosine(out) + H(+)(in). Involved in the efflux of purine ribonucleosides, such as inosine and guanosine. The protein is Purine ribonucleoside efflux pump NepI of Escherichia coli O127:H6 (strain E2348/69 / EPEC).